A 266-amino-acid polypeptide reads, in one-letter code: Chymotrypsin-like elastase family member 1 (266 aa).

Positions 1-16 are cleaved as a signal peptide; sequence MLRFLVLATLVLYGHS. Positions 17-26 are cleaved as a propeptide — activation peptide; it reads TRDFPETNAR. Residues 27–264 form the Peptidase S1 domain; sequence VVGGTEARKN…YISWINNVIA (238 aa). Cysteine 56 and cysteine 72 form a disulfide bridge. Catalysis depends on histidine 71, which acts as the Charge relay system. Ca(2+)-binding residues include glutamate 85, asparagine 87, glutamine 90, and glutamate 95. Asparagine 87 is a glycosylation site (N-linked (GlcNAc...) asparagine). Catalysis depends on aspartate 119, which acts as the Charge relay system. 3 disulfide bridges follow: cysteine 153–cysteine 220, cysteine 184–cysteine 200, and cysteine 210–cysteine 240. Serine 214 acts as the Charge relay system in catalysis. A glycan (N-linked (GlcNAc...) asparagine) is linked at asparagine 241.

Belongs to the peptidase S1 family. Elastase subfamily. Ca(2+) serves as cofactor.

Its subcellular location is the secreted. The catalysed reaction is Hydrolysis of proteins, including elastin. Preferential cleavage: Ala-|-Xaa.. Its function is as follows. Serine proteases that hydrolyze many proteins in addition to elastin. In Felis catus (Cat), this protein is Chymotrypsin-like elastase family member 1 (CELA1).